Here is a 201-residue protein sequence, read N- to C-terminus: MEAFTKHTGLAVMIDSANVDTDQIIPKQFLSKVTRDGFGVHLFHDWRYLDDAGDEPNPEFTLNQSRYKGASILISKENFGCGSSREHAPWALADFGLRAIIAPSFADIFYGNSINNGLLPVRLSDVEVQQLMDEVQANEGAEITVDLEGLTVTSPSGAVFSFEIAGSARHNMLNGLDAIGLTLAYDVQIASYESQLPAWKA.

It belongs to the LeuD family. LeuD type 1 subfamily. As to quaternary structure, heterodimer of LeuC and LeuD.

The catalysed reaction is (2R,3S)-3-isopropylmalate = (2S)-2-isopropylmalate. The protein operates within amino-acid biosynthesis; L-leucine biosynthesis; L-leucine from 3-methyl-2-oxobutanoate: step 2/4. Functionally, catalyzes the isomerization between 2-isopropylmalate and 3-isopropylmalate, via the formation of 2-isopropylmaleate. This chain is 3-isopropylmalate dehydratase small subunit, found in Shewanella woodyi (strain ATCC 51908 / MS32).